We begin with the raw amino-acid sequence, 931 residues long: Protein translocase subunit SecA (931 aa).

ATP-binding positions include Gln87, 105-109, and Asp515; that span reads GEGKT. Cys915, Cys917, Cys926, and His927 together coordinate Zn(2+).

The protein belongs to the SecA family. Monomer and homodimer. Part of the essential Sec protein translocation apparatus which comprises SecA, SecYEG and auxiliary proteins SecDF-YajC and YidC. The cofactor is Zn(2+).

It localises to the cell inner membrane. Its subcellular location is the cytoplasm. It catalyses the reaction ATP + H2O + cellular proteinSide 1 = ADP + phosphate + cellular proteinSide 2.. Part of the Sec protein translocase complex. Interacts with the SecYEG preprotein conducting channel. Has a central role in coupling the hydrolysis of ATP to the transfer of proteins into and across the cell membrane, serving both as a receptor for the preprotein-SecB complex and as an ATP-driven molecular motor driving the stepwise translocation of polypeptide chains across the membrane. This chain is Protein translocase subunit SecA, found in Burkholderia ambifaria (strain ATCC BAA-244 / DSM 16087 / CCUG 44356 / LMG 19182 / AMMD) (Burkholderia cepacia (strain AMMD)).